The primary structure comprises 431 residues: 4-hydroxy-3-methylbut-2-en-1-yl diphosphate synthase (flavodoxin) (431 aa).

Over residues 1–12 (MNKLENPLRDDV) the composition is skewed to basic and acidic residues. The tract at residues 1–20 (MNKLENPLRDDVAGPAPRHQ) is disordered. Residues Cys310, Cys313, Cys356, and Glu363 each contribute to the [4Fe-4S] cluster site.

The protein belongs to the IspG family. It depends on [4Fe-4S] cluster as a cofactor.

It carries out the reaction (2E)-4-hydroxy-3-methylbut-2-enyl diphosphate + oxidized [flavodoxin] + H2O + 2 H(+) = 2-C-methyl-D-erythritol 2,4-cyclic diphosphate + reduced [flavodoxin]. The protein operates within isoprenoid biosynthesis; isopentenyl diphosphate biosynthesis via DXP pathway; isopentenyl diphosphate from 1-deoxy-D-xylulose 5-phosphate: step 5/6. In terms of biological role, converts 2C-methyl-D-erythritol 2,4-cyclodiphosphate (ME-2,4cPP) into 1-hydroxy-2-methyl-2-(E)-butenyl 4-diphosphate. The chain is 4-hydroxy-3-methylbut-2-en-1-yl diphosphate synthase (flavodoxin) from Rhodopseudomonas palustris (strain TIE-1).